The following is a 411-amino-acid chain: Peptidase T (411 aa).

Histidine 78 contributes to the Zn(2+) binding site. Residue aspartate 80 is part of the active site. Aspartate 140 lines the Zn(2+) pocket. The Proton acceptor role is filled by glutamate 173. Residues glutamate 174, aspartate 196, and histidine 379 each contribute to the Zn(2+) site.

The protein belongs to the peptidase M20B family. Zn(2+) is required as a cofactor.

Its subcellular location is the cytoplasm. It catalyses the reaction Release of the N-terminal residue from a tripeptide.. Functionally, cleaves the N-terminal amino acid of tripeptides. This Yersinia pestis bv. Antiqua (strain Antiqua) protein is Peptidase T.